The following is a 313-amino-acid chain: 7,8-didemethyl-8-hydroxy-5-deazariboflavin synthase (313 aa).

Residues 4-235 (ITYSPAYTLV…AEITLQIPPN (232 aa)) enclose the Radical SAM core domain. [4Fe-4S] cluster-binding residues include C18, C22, and C25.

This sequence belongs to the radical SAM superfamily. CofG family. As to quaternary structure, consists of two subunits, CofG and CofH. It depends on [4Fe-4S] cluster as a cofactor.

It catalyses the reaction 5-amino-5-(4-hydroxybenzyl)-6-(D-ribitylimino)-5,6-dihydrouracil + S-adenosyl-L-methionine = 7,8-didemethyl-8-hydroxy-5-deazariboflavin + 5'-deoxyadenosine + L-methionine + NH4(+) + H(+). It participates in cofactor biosynthesis; coenzyme F0 biosynthesis. Its function is as follows. Catalyzes the radical-mediated synthesis of 7,8-didemethyl-8-hydroxy-5-deazariboflavin from 5-amino-5-(4-hydroxybenzyl)-6-(D-ribitylimino)-5,6-dihydrouracil. The sequence is that of 7,8-didemethyl-8-hydroxy-5-deazariboflavin synthase from Synechocystis sp. (strain ATCC 27184 / PCC 6803 / Kazusa).